Here is a 777-residue protein sequence, read N- to C-terminus: Ethylene receptor 4 (777 aa).

Helical transmembrane passes span leucine 49 to alanine 69, alanine 77 to phenylalanine 97, and alanine 113 to isoleucine 133. Residues cysteine 88 and histidine 92 each contribute to the Cu cation site. The 161-residue stretch at aspartate 184–leucine 344 folds into the GAF domain. One can recognise a Histidine kinase domain in the interval alanine 387 to serine 521. Histidine 390 bears the Phosphohistidine; by autocatalysis mark. Residues arginine 645–leucine 774 enclose the Response regulatory domain. Aspartate 696 is modified (4-aspartylphosphate).

The protein belongs to the ethylene receptor family. Cu cation is required as a cofactor.

It localises to the endoplasmic reticulum membrane. The catalysed reaction is ATP + protein L-histidine = ADP + protein N-phospho-L-histidine.. Its function is as follows. Ethylene receptor related to bacterial two-component regulators. Acts as a redundant negative regulator of ethylene signaling. The sequence is that of Ethylene receptor 4 (ETR4) from Oryza sativa subsp. japonica (Rice).